A 45-amino-acid chain; its full sequence is Natriuretic peptide OsNP-d (45 aa).

Residues 1–5 constitute a propeptide that is removed on maturation; sequence PAAGL. An intrachain disulfide couples C14 to C30.

Belongs to the natriuretic peptide family. Expressed by the venom gland.

Its subcellular location is the secreted. In terms of biological role, snake venom natriuretic peptide that targets both NPR1 and NPR2. Exhibits hypotensive and vasodepressor activities. The protein is Natriuretic peptide OsNP-d of Oxyuranus scutellatus scutellatus (Australian taipan).